Here is a 1004-residue protein sequence, read N- to C-terminus: Kinesin-like protein KIN-14R (1004 aa).

Disordered regions lie at residues 1 to 21, 61 to 90, and 110 to 169; these read MEEEGSGRGGDGPAAHGRIGD, PYVDDDDDGNSEEENSASSGILPCDGMQHD, and ELFS…ATMG. Acidic residues predominate over residues 63-75; the sequence is VDDDDDGNSEEEN. Over residues 115-125 the composition is skewed to pro residues; sequence PSPPQGPPSPS. Coiled-coil stretches lie at residues 189–230 and 266–338; these read CGQL…AQAS and LNDL…LYNK. The region spanning 345–671 is the Kinesin motor domain; that stretch reads NIRVFCRCRP…LNFASRVRGI (327 aa). 428-435 lines the ATP pocket; that stretch reads GQTGTGKT. Residues 691–742 are a coiled coil; it reads MAGRAKQDSKNKDAQIKSMEETIQSLEAKNKAKDLLTMNLQEKIKELEAQLL. Disordered stretches follow at residues 759 to 791 and 946 to 1004; these read DHLHQQQQSKKPENSPCPTRSPMAERNLNSTAE and SGRR…RQLN. The segment covering 948 to 958 has biased composition (low complexity); that stretch reads RRAGAGVAGTT. Residues 995 to 1004 are compositionally biased toward polar residues; it reads NNGTSLRQLN.

Belongs to the TRAFAC class myosin-kinesin ATPase superfamily. Kinesin family. KIN-14 subfamily.

This Oryza sativa subsp. japonica (Rice) protein is Kinesin-like protein KIN-14R.